The following is a 367-amino-acid chain: Probable butyrate kinase (367 aa).

This sequence belongs to the acetokinase family.

It localises to the cytoplasm. It catalyses the reaction butanoate + ATP = butanoyl phosphate + ADP. This chain is Probable butyrate kinase, found in Bacillus anthracis (strain A0248).